We begin with the raw amino-acid sequence, 1588 residues long: Pentafunctional AROM polypeptide (1588 aa).

Positions 1–392 (MVQLAKVPIL…YGDSAQFVSD (392 aa)) are 3-dehydroquinate synthase. NAD(+)-binding positions include 43-45 (DTN), 78-81 (ETSK), 109-111 (GGV), and Asp-114. Position 125 (Arg-125) interacts with 7-phospho-2-dehydro-3-deoxy-D-arabino-heptonate. Position 134–135 (134–135 (TS)) interacts with NAD(+). Residues Asp-141 and Lys-147 each coordinate 7-phospho-2-dehydro-3-deoxy-D-arabino-heptonate. An NAD(+)-binding site is contributed by Lys-156. Asn-157 lines the 7-phospho-2-dehydro-3-deoxy-D-arabino-heptonate pocket. NAD(+)-binding positions include 174–177 (WLET) and Asn-185. Position 189 (Glu-189) interacts with Zn(2+). 7-phospho-2-dehydro-3-deoxy-D-arabino-heptonate-binding positions include 189–192 (EVIK) and Lys-258. Catalysis depends on Glu-268, which acts as the Proton acceptor; for 3-dehydroquinate synthase activity. Residues 272–276 (RNLLN) and His-279 each bind 7-phospho-2-dehydro-3-deoxy-D-arabino-heptonate. His-279 serves as a coordination point for Zn(2+). The active-site Proton acceptor; for 3-dehydroquinate synthase activity is His-283. 7-phospho-2-dehydro-3-deoxy-D-arabino-heptonate is bound by residues His-295 and Lys-364. Residue His-295 coordinates Zn(2+). The EPSP synthase stretch occupies residues 405–871 (VYPFKDIPAD…WDVLHSELGA (467 aa)). Residue Cys-853 is the For EPSP synthase activity of the active site. Positions 890–1080 (SVVIIGMRAA…IPSGRSAFVC (191 aa)) are shikimate kinase. 895–902 (GMRAAGKT) contributes to the ATP binding site. The tract at residues 1081 to 1293 (LTFDDLTEQT…AAPGQLTVAQ (213 aa)) is 3-dehydroquinase. The Proton acceptor; for 3-dehydroquinate dehydratase activity role is filled by His-1198. Lys-1227 serves as the catalytic Schiff-base intermediate with substrate; for 3-dehydroquinate dehydratase activity. The tract at residues 1306 to 1588 (PKELFVVGKP…KAIFDAVTKE (283 aa)) is shikimate dehydrogenase.

In the N-terminal section; belongs to the sugar phosphate cyclases superfamily. Dehydroquinate synthase family. This sequence in the 2nd section; belongs to the EPSP synthase family. It in the 3rd section; belongs to the shikimate kinase family. The protein in the 4th section; belongs to the type-I 3-dehydroquinase family. In the C-terminal section; belongs to the shikimate dehydrogenase family. Homodimer. Zn(2+) is required as a cofactor.

The protein localises to the cytoplasm. It carries out the reaction 7-phospho-2-dehydro-3-deoxy-D-arabino-heptonate = 3-dehydroquinate + phosphate. The enzyme catalyses 3-dehydroquinate = 3-dehydroshikimate + H2O. It catalyses the reaction shikimate + NADP(+) = 3-dehydroshikimate + NADPH + H(+). The catalysed reaction is shikimate + ATP = 3-phosphoshikimate + ADP + H(+). It carries out the reaction 3-phosphoshikimate + phosphoenolpyruvate = 5-O-(1-carboxyvinyl)-3-phosphoshikimate + phosphate. The protein operates within metabolic intermediate biosynthesis; chorismate biosynthesis; chorismate from D-erythrose 4-phosphate and phosphoenolpyruvate: step 2/7. It participates in metabolic intermediate biosynthesis; chorismate biosynthesis; chorismate from D-erythrose 4-phosphate and phosphoenolpyruvate: step 3/7. Its pathway is metabolic intermediate biosynthesis; chorismate biosynthesis; chorismate from D-erythrose 4-phosphate and phosphoenolpyruvate: step 4/7. It functions in the pathway metabolic intermediate biosynthesis; chorismate biosynthesis; chorismate from D-erythrose 4-phosphate and phosphoenolpyruvate: step 5/7. The protein operates within metabolic intermediate biosynthesis; chorismate biosynthesis; chorismate from D-erythrose 4-phosphate and phosphoenolpyruvate: step 6/7. Functionally, the AROM polypeptide catalyzes 5 consecutive enzymatic reactions in prechorismate polyaromatic amino acid biosynthesis. The sequence is that of Pentafunctional AROM polypeptide from Saccharomyces cerevisiae (strain Lalvin EC1118 / Prise de mousse) (Baker's yeast).